A 441-amino-acid polypeptide reads, in one-letter code: Glutamate-1-semialdehyde 2,1-aminomutase (441 aa).

Position 279 is an N6-(pyridoxal phosphate)lysine (K279).

It belongs to the class-III pyridoxal-phosphate-dependent aminotransferase family. HemL subfamily. Homodimer. Requires pyridoxal 5'-phosphate as cofactor.

Its subcellular location is the cytoplasm. It carries out the reaction (S)-4-amino-5-oxopentanoate = 5-aminolevulinate. Its pathway is porphyrin-containing compound metabolism; protoporphyrin-IX biosynthesis; 5-aminolevulinate from L-glutamyl-tRNA(Glu): step 2/2. This is Glutamate-1-semialdehyde 2,1-aminomutase from Leptospira borgpetersenii serovar Hardjo-bovis (strain JB197).